The primary structure comprises 715 residues: ATP-dependent DNA helicase Hel308 (715 aa).

Residues 8–36 (MPIEDLKLPSNVIEIIKKRGIKKLNPPQT) carry the Q motif motif. Residues Gln-35 and 53–60 (SPTGSGKT) contribute to the ATP site. One can recognise a Helicase ATP-binding domain in the interval 40–203 (KKGLLEGNRL…WLGAEPVATN (164 aa)). The DEAH box motif lies at 152-155 (DELH). A Helicase C-terminal domain is found at 236–442 (HGDDAIIAYT…ERAFYTFLLG (207 aa)).

This sequence belongs to the helicase family. Hel308 subfamily. In terms of assembly, monomer.

The enzyme catalyses Couples ATP hydrolysis with the unwinding of duplex DNA by translocating in the 3'-5' direction.. It carries out the reaction ATP + H2O = ADP + phosphate + H(+). In terms of biological role, DNA-dependent ATPase and 3'-5' DNA helicase that may be involved in repair of stalled replication forks. A low processivity 3'-5' helicase. Unwinds short dsDNA substrates with 3'-overhangs (25 bp dsDNA with 25 base overhang), less active on longer dsDNA substrates. Also unwinds the lagging strand of a stalled replication fork (but the leading strand was not tested). Binds ssDNA, but dsDNA about 35-fold less well. Able to displace streptavidin from biotinylated ssDNA, which is partially inhibited by DNA-binding proteins, suggesting it may play a role in stripping proteins from stalled replication forks. The polypeptide is ATP-dependent DNA helicase Hel308 (Saccharolobus solfataricus (strain 98/2) (Sulfolobus solfataricus)).